Consider the following 849-residue polypeptide: Putative endoplasmic reticulum mannosidase MNL2 (849 aa).

Over Met1–Arg12 the chain is Cytoplasmic. The helical; Signal-anchor for type II membrane protein transmembrane segment at Arg13–Phe32 threads the bilayer. The Lumenal segment spans residues Gln33 to Lys849. Asn45 carries N-linked (GlcNAc...) asparagine glycosylation. Residues His56 to Thr79 form a disordered region. Cys559 and Cys598 form a disulfide bridge.

Belongs to the glycosyl hydrolase 47 family. The cofactor is Ca(2+).

The protein resides in the endoplasmic reticulum membrane. Its pathway is protein modification; protein glycosylation. Its function is as follows. Putative mannosidase involved in glycoprotein quality control since it is involved in the targeting of misfolded glycoproteins for ER-associated protein degradation (ERAD). The protein is Putative endoplasmic reticulum mannosidase MNL2 (MNL2) of Saccharomyces cerevisiae (strain ATCC 204508 / S288c) (Baker's yeast).